The sequence spans 1616 residues: DNA (cytosine-5)-methyltransferase 1 (1616 aa).

The tract at residues 1 to 120 (MPARTAPARV…NQARSEARRV (120 aa)) is interaction with DMAP1. Residues 1-148 (MPARTAPARV…RRSKSDGEAK (148 aa)) form an interaction with DNMT3A region. Interaction with the PRC2/EED-EZH2 complex regions lie at residues 1–336 (MPAR…TEKK) and 308–606 (NPQI…TIRH). A DMAP1-binding domain is found at 16-109 (PAISLPDDVR…NREVNGRLEN (94 aa)). An N6,N6-dimethyllysine modification is found at Lys-70. Residues 103–349 (VNGRLENGNQ…AKTVMNSKTH (247 aa)) form a disordered region. Phosphoserine is present on residues Ser-127 and Ser-133. Thr-137 carries the post-translational modification Phosphothreonine. Ser-141 is modified (phosphoserine). Lys-142 carries the post-translational modification N6-methyllysine; by SETD7. Ser-143 is modified (phosphoserine; by PKB/AKT1). Residues 149–217 (PEPSPSPRIT…TSRERVARPL (69 aa)) form an interaction with DNMT3B region. Ser-152 and Ser-154 each carry phosphoserine. Lys-160 carries the post-translational modification N6-acetyllysine. Positions 163-174 (RQTTITSHFAKG) are interaction with PCNA. Thr-166 carries the phosphothreonine modification. N6-acetyllysine is present on residues Lys-173 and Lys-188. The short motif at 177–205 (KRKPQEESERAKSDESIKEEDKDQDEKRR) is the Nuclear localization signal element. Basic and acidic residues-rich tracts occupy residues 179 to 214 (KPQE…ERVA), 221 to 267 (EPER…REAR), and 281 to 306 (KDEK…EPEK). Lys-259 is modified (N6-acetyllysine; alternate). Lys-259 participates in a covalent cross-link: Glycyl lysine isopeptide (Lys-Gly) (interchain with G-Cter in SUMO2); alternate. The tract at residues 310–502 (QISDEKDEDE…PEYAPIFGLM (193 aa)) is homodimerization. A Phosphoserine modification is found at Ser-312. Over residues 321–337 (EEKRRKTTPKEPTEKKM) the composition is skewed to basic and acidic residues. The DNA replication foci-targeting sequence stretch occupies residues 331 to 550 (EPTEKKMARA…NLNRFTEDSL (220 aa)). Zn(2+) is bound by residues Cys-353 and Cys-356. Lys-366 carries the N6-acetyllysine modification. 2 positions are modified to phosphoserine: Ser-394 and Ser-398. Residues Cys-414 and His-418 each coordinate Zn(2+). Residues Ser-509 and Ser-549 each carry the phosphoserine modification. The segment at 646–692 (NAFKRRRCGVCEVCQQPECGKCKACKDMVKFGGSGRSKQACQERRCP) adopts a CXXC-type zinc-finger fold. A required for activity region spans residues 651–697 (RRCGVCEVCQQPECGKCKACKDMVKFGGSGRSKQACQERRCPNMAMK). Cys-653, Cys-656, Cys-659, Cys-664, Cys-667, Cys-670, Cys-686, and Cys-691 together coordinate Zn(2+). The segment at 693–754 (NMAMKEADDD…SYYKKVCIDA (62 aa)) is autoinhibitory linker. Positions 699–709 (ADDDEEVDDNI) are enriched in acidic residues. Residues 699 to 729 (ADDDEEVDDNIPEMPSPKKMHQGKKKKQNKN) are disordered. Position 714 is a phosphoserine (Ser-714). Over residues 716–728 (KKMHQGKKKKQNK) the composition is skewed to basic residues. Ser-732 carries the phosphoserine modification. Lys-749 carries the N6-acetyllysine modification. The region spanning 755 to 880 (ETLEVGDCVS…QDYARFESPP (126 aa)) is the BAH 1 domain. Position 878 is a phosphoserine (Ser-878). N6-acetyllysine occurs at positions 891, 957, 961, 975, and 1054. In terms of domain architecture, BAH 2 spans 972–1100 (HYRKYSDYIK…AKSKSFEDPP (129 aa)). The interval 1095–1130 (SFEDPPNHARSPGNKGKGKGKGKGKPKSQACEPSEP) is disordered. 5 repeat units span residues 1109 to 1110 (KG), 1111 to 1112 (KG), 1113 to 1114 (KG), 1115 to 1116 (KG), and 1117 to 1118 (KG). The 6 X 2 AA tandem repeats of K-G stretch occupies residues 1109 to 1120 (KGKGKGKGKGKP). Basic residues predominate over residues 1110–1120 (GKGKGKGKGKP). N6-acetyllysine is present on residues Lys-1111, Lys-1113, and Lys-1115. At Lys-1117 the chain carries N6-acetyllysine; by EHMT2. 2 positions are modified to N6-acetyllysine: Lys-1119 and Lys-1121. The stretch at 1119-1120 (KP) is one 6; approximate repeat. The segment at 1121 to 1616 (KSQACEPSEP…KIKEEEAAKD (496 aa)) is interaction with the PRC2/EED-EZH2 complex. In terms of domain architecture, SAM-dependent MTase C5-type spans 1139-1599 (LRTLDVFSGC…LEIKLCMLAK (461 aa)). Residues 1139 to 1616 (LRTLDVFSGC…KIKEEEAAKD (478 aa)) are catalytic. Residues Ser-1146, 1150–1151 (GL), 1168–1169 (EM), 1190–1191 (DC), and Cys-1191 each bind S-adenosyl-L-methionine. Cys-1226 is an active-site residue. Residues Lys-1349 and Lys-1415 each carry the N6-acetyllysine modification. Positions 1578 and 1580 each coordinate S-adenosyl-L-methionine. Lys-1609 participates in a covalent cross-link: Glycyl lysine isopeptide (Lys-Gly) (interchain with G-Cter in SUMO2).

It belongs to the class I-like SAM-binding methyltransferase superfamily. C5-methyltransferase family. In terms of assembly, homodimer. Forms a stable complex with E2F1, BB1 and HDAC1. Forms a complex with DMAP1 and HDAC2, with direct interaction. Interacts with the PRC2/EED-EZH2 complex. Probably part of a corepressor complex containing ZNF304, TRIM28, SETDB1 and DNMT1. Interacts with UHRF1; promoting its recruitment to hemimethylated DNA. Interacts with USP7, promoting its deubiquitination. Interacts with PCNA. Interacts with MBD2 and MBD3. Interacts with DNMT3A and DNMT3B. Interacts with UBC9. Interacts with CSNK1D. Interacts with HDAC1. Interacts with BAZ2A/TIP5. Interacts with SIRT7. Interacts with ZNF263; recruited to the SIX3 promoter along with other proteins involved in chromatin modification and transcriptional corepression where it contributes to transcriptional repression. Interacts with L3MBTL3 and DCAF5; the interaction requires DNMT1 methylation at Lys-142 and is necessary to target DNMT1 for ubiquitination by the CRL4-DCAF5 E3 ubiquitin ligase complex and proteasomal degradation. Interacts with PHF20L1; the interaction requires DNMT1 methylation at Lys-142 and protects DNMT1 from ubiquitination and proteasomal degradation. Sumoylated; sumoylation increases activity. Post-translationally, acetylation on multiple lysines, mainly by KAT2B/PCAF, regulates cell cycle G(2)/M transition. Deacetylation of Lys-1349 and Lys-1415 by SIRT1 increases methyltransferase activity. In terms of processing, phosphorylation of Ser-154 by CDKs is important for enzymatic activity and protein stability. Phosphorylation of Ser-143 by AKT1 prevents methylation by SETD7 thereby increasing DNMT1 stability. Methylation at Lys-142 by SETD7 is necessary for the regulation of DNMT1 proteasomal degradation. Post-translationally, ubiquitinated by UHRF1; interaction with USP7 counteracts ubiquitination by UHRF1 by promoting deubiquitination and preventing degradation by the proteasome. As to expression, ubiquitous; highly expressed in fetal tissues, heart, kidney, placenta, peripheral blood mononuclear cells, and expressed at lower levels in spleen, lung, brain, small intestine, colon, liver, and skeletal muscle. Isoform 2 is less expressed than isoform 1.

It is found in the nucleus. The enzyme catalyses a 2'-deoxycytidine in DNA + S-adenosyl-L-methionine = a 5-methyl-2'-deoxycytidine in DNA + S-adenosyl-L-homocysteine + H(+). Methylates CpG residues. Preferentially methylates hemimethylated DNA. Associates with DNA replication sites in S phase maintaining the methylation pattern in the newly synthesized strand, that is essential for epigenetic inheritance. Associates with chromatin during G2 and M phases to maintain DNA methylation independently of replication. It is responsible for maintaining methylation patterns established in development. DNA methylation is coordinated with methylation of histones. Mediates transcriptional repression by direct binding to HDAC2. In association with DNMT3B and via the recruitment of CTCFL/BORIS, involved in activation of BAG1 gene expression by modulating dimethylation of promoter histone H3 at H3K4 and H3K9. Probably forms a corepressor complex required for activated KRAS-mediated promoter hypermethylation and transcriptional silencing of tumor suppressor genes (TSGs) or other tumor-related genes in colorectal cancer (CRC) cells. Also required to maintain a transcriptionally repressive state of genes in undifferentiated embryonic stem cells (ESCs). Associates at promoter regions of tumor suppressor genes (TSGs) leading to their gene silencing. Promotes tumor growth. This chain is DNA (cytosine-5)-methyltransferase 1 (DNMT1), found in Homo sapiens (Human).